The primary structure comprises 327 residues: Movement protein (327 aa).

Residues 252–311 (DLTREEREKAAQLEMLRKTREVHTQRSAEEMKRRQAELAKDTQRKLAEEAKAVTEKRKNM) are a coiled coil. Disordered regions lie at residues 271–294 (REVH…KDTQ) and 307–327 (KRKN…FDSV). Polar residues predominate over residues 313-327 (GVNSSNIKFGNFDSV).

It is found in the host cell wall. Its subcellular location is the host cytoplasm. Its function is as follows. Transports viral genome to neighboring plant cells directly through plasmosdesmata, without any budding. The movement protein allows efficient cell to cell propagation, by bypassing the host cell wall barrier. The chain is Movement protein from Hordeum vulgare (Barley).